The chain runs to 222 residues: Endonuclease V (222 aa).

Positions 34 and 102 each coordinate Mg(2+).

The protein belongs to the endonuclease V family. It depends on Mg(2+) as a cofactor.

It is found in the cytoplasm. The catalysed reaction is Endonucleolytic cleavage at apurinic or apyrimidinic sites to products with a 5'-phosphate.. Functionally, DNA repair enzyme involved in the repair of deaminated bases. Selectively cleaves double-stranded DNA at the second phosphodiester bond 3' to a deoxyinosine leaving behind the intact lesion on the nicked DNA. The chain is Endonuclease V from Photorhabdus laumondii subsp. laumondii (strain DSM 15139 / CIP 105565 / TT01) (Photorhabdus luminescens subsp. laumondii).